The sequence spans 468 residues: Phosphatidylglycerol--prolipoprotein diacylglyceryl transferase (468 aa).

3 helical membrane passes run 21–41, 56–76, and 96–116; these read LPVR…LLIG, YDIA…YHLA, and IWDG…GAWI. R144 lines the a 1,2-diacyl-sn-glycero-3-phospho-(1'-sn-glycerol) pocket. 3 helical membrane-spanning segments follow: residues 192–212, 218–238, and 256–276; these read VVQP…VALI, FIIG…AGRF, and INSF…ILAP. The segment at 349-468 is disordered; the sequence is VVQVADRDGE…RWWRLRRRRQ (120 aa). A compositionally biased stretch (low complexity) spans 391-406; that stretch reads AEAASAAPEEPAALAS. A compositionally biased stretch (basic and acidic residues) spans 445-455; it reads DGIRRQDDFSS. The segment covering 456–468 has biased composition (basic residues); it reads RRRRWWRLRRRRQ.

It belongs to the Lgt family.

It localises to the cell membrane. The enzyme catalyses L-cysteinyl-[prolipoprotein] + a 1,2-diacyl-sn-glycero-3-phospho-(1'-sn-glycerol) = an S-1,2-diacyl-sn-glyceryl-L-cysteinyl-[prolipoprotein] + sn-glycerol 1-phosphate + H(+). It participates in protein modification; lipoprotein biosynthesis (diacylglyceryl transfer). Functionally, catalyzes the transfer of the diacylglyceryl group from phosphatidylglycerol to the sulfhydryl group of the N-terminal cysteine of a prolipoprotein, the first step in the formation of mature lipoproteins. This is Phosphatidylglycerol--prolipoprotein diacylglyceryl transferase from Mycobacterium bovis (strain ATCC BAA-935 / AF2122/97).